We begin with the raw amino-acid sequence, 344 residues long: RNA-binding protein squid (344 aa).

The disordered stretch occupies residues 1–55; sequence MAENKQVDTEINGEDFTKDVTADGPGSENGDAGAAGSTNGSSDNQSAASGQRDDD. Residues 36–49 show a composition bias toward polar residues; sequence GSTNGSSDNQSAAS. RRM domains follow at residues 56 to 138 and 136 to 213; these read RKLF…HGKI and GKIF…RATP. At Ser148 the chain carries Phosphoserine. Disordered stretches follow at residues 214-238 and 301-344; these read KPEN…RGGY and GGGG…HQPY. Residues 215–254 are M9-like motif; that stretch reads PENQMMGGMRGGPRGGMRGGRGGYGGRGGYNNQWDGQGSY. 2 stretches are compositionally biased toward gly residues: residues 222–238 and 301–337; these read GMRG…RGGY and GGGG…GGGR. The tract at residues 300–338 is M9 motif; that stretch reads GGGGGGNMGGGRGGPRGGGGPKGGGGFNGGKQRGGGGRQ.

Interacts with bru1/Bruno; the interaction is direct but weak, and may play a role in regulation of grk mRNA localization and translation. As to quaternary structure, interacts (probably via M9 and M9-like motifs) with Tnpo/Transportin; the interaction is direct and is involved in nuclear localization. Interacts with fs(1)K10 (via N-terminus); may be involved in localization of sqd in the oocyte during oogenesis. In terms of assembly, interacts (via C-terminus) with Hrb27C; the interaction is RNA dependent. Does not interact with Tnpo/Transportin. Interacts with fs(1)K10 (via N-terminus); may be involved in localization of sqd in the oocyte during oogenesis. Interacts (probably via M9-like motif) with Tnpo/Transportin; the interaction is direct and is involved in nuclear localization. Interacts with fs(1)K10 (via N-terminus); may be involved in localization of sqd in the oocyte during oogenesis.

The protein resides in the nucleus. The protein localises to the cytoplasm. Component of ribonucleosomes. Could be needed to organize a concentration gradient of a dorsalizing morphogen (Dm) originating in the germinal vesicle. At least one of the isoforms is essential in somatic tissues. Interacts with grk mRNA (via 3' UTR) and involved in its localization to the dorsal anterior region of the oocyte during dorsal-ventral axis determination; may function as a ribonuclear protein complex together with otu and Hrb27C. Required for polytene chromosome dispersal in nurse cells during oogenesis; nuclear isoforms play a greater role in this than cytoplasmic isoforms. Its function is as follows. Required nonredundantly with isoform A/sqdA for dorsoventral pattern determination during oogenesis. May be important in somatic tissues. Functionally, required nonredundantly with isoform B/SqdS for dorsoventral pattern determination during oogenesis. In terms of biological role, may lack a role in dorsoventral pattern determination during oogenesis. May be important in somatic tissues. This is RNA-binding protein squid from Drosophila melanogaster (Fruit fly).